The primary structure comprises 260 residues: Acetylglutamate kinase (260 aa).

Substrate contacts are provided by residues 41-42 (GG), R63, and N157.

This sequence belongs to the acetylglutamate kinase family. ArgB subfamily.

The protein resides in the cytoplasm. The enzyme catalyses N-acetyl-L-glutamate + ATP = N-acetyl-L-glutamyl 5-phosphate + ADP. It participates in amino-acid biosynthesis; L-arginine biosynthesis; N(2)-acetyl-L-ornithine from L-glutamate: step 2/4. In terms of biological role, catalyzes the ATP-dependent phosphorylation of N-acetyl-L-glutamate. The sequence is that of Acetylglutamate kinase from Acidobacterium capsulatum (strain ATCC 51196 / DSM 11244 / BCRC 80197 / JCM 7670 / NBRC 15755 / NCIMB 13165 / 161).